Reading from the N-terminus, the 294-residue chain is Phenylalanine-4-hydroxylase (294 aa).

The segment at 1-20 is disordered; that stretch reads MSGDGLSNGPPPGARPDWTI. Residues His-129, His-134, and Glu-175 each coordinate Fe cation.

This sequence belongs to the biopterin-dependent aromatic amino acid hydroxylase family. Requires Fe(2+) as cofactor.

The catalysed reaction is (6R)-L-erythro-5,6,7,8-tetrahydrobiopterin + L-phenylalanine + O2 = (4aS,6R)-4a-hydroxy-L-erythro-5,6,7,8-tetrahydrobiopterin + L-tyrosine. The protein operates within amino-acid degradation; L-phenylalanine degradation; acetoacetate and fumarate from L-phenylalanine: step 1/6. The protein is Phenylalanine-4-hydroxylase (phhA) of Caulobacter vibrioides (strain ATCC 19089 / CIP 103742 / CB 15) (Caulobacter crescentus).